The sequence spans 709 residues: SH3 domain-containing kinase-binding protein 1 (709 aa).

SH3 domains follow at residues methionine 1–lysine 58 and arginine 98–glycine 157. 4 positions are modified to phosphoserine: serine 156, serine 159, serine 227, and serine 274. Residues glutamate 221–glycine 239 show a composition bias toward low complexity. Residues glutamate 221 to glycine 242 form a disordered region. 3 disordered regions span residues glycine 289 to arginine 309, serine 372 to leucine 485, and aspartate 511 to glutamine 650. Threonine 298 carries the phosphothreonine modification. Residues lysine 311–serine 372 enclose the SH3 3 domain. The segment covering threonine 399 to leucine 434 has biased composition (basic and acidic residues). At serine 480 the chain carries Phosphoserine. Polar residues predominate over residues valine 513–proline 528. The segment covering proline 535 to proline 554 has biased composition (low complexity). Residues serine 553, serine 555, and serine 565 each carry the phosphoserine modification. Over residues glutamate 561–lysine 575 the composition is skewed to basic and acidic residues. Over residues lysine 579–serine 592 the composition is skewed to polar residues. Positions methionine 600 to glycine 623 are enriched in low complexity. The span at glutamine 627–serine 636 shows a compositional bias: polar residues. Serine 631 bears the Phosphoserine mark. The stretch at alanine 646–serine 708 forms a coiled coil.

In terms of assembly, can self-associate and form homotetramers. Interacts with CD2, F-actin capping protein, PIK3R3, GRB2, EGFR, MET, BLNK, MAP3K4, PDCD6IP, SPRY2, ARHGAP17, ARHGAP27, CRK, BCAR1, SOS1, ASAP1, ARAP3, HIP1R, SYNJ2, INPP5D and STAP1. Interacts with E3 ubiquitin-protein ligase CBL. Interacts with CBLB, but does not interact with CBLC. Two molecules of SH3KBP1 seem to bind through their respective SH3 1 domain to one molecule of CBLB. The interaction with CBL or CBLB and EGFR is increased upon EGF stimulation. The interaction with CBL is attenuated by PDCD6IP. Interacts (via SH3 domains) with ARAP1. The interaction is independent of EGF and does not affect ARAP1 GTPase-activating activity but is involved in regulating ubiquitination and endocytic trafficking of EGFR. ARAP1 competes with CBL for binding to SH3KBP1 and prevents interaction of CBL with SH3KBP1; this is likely to regulate SH3KBP1-mediated internalization of EGFR. Interacts through its proline-rich region with the SH3 domain of endophilins SH3GL1, SH3GL2 and SH3GL3. The SH3KBP1-endophilin complex seems to associate with a complex containing the phosphorylated receptor (EGFR or MET) and phosphorylated CBL. Probably associates with ASAP1 and phosphorylated EGFR. Probably part of a complex consisting of at least SH3KBP1, ASAP1 and ARAP3. Interacts with focal adhesion kinases PTK2/FAK1 and PTK2B/PYK2, probably as a dimer. Interacts with DAB2 and probably associates with chathrin through its interaction with DAB2. Part of a complex consisting of SH3KBP1, DAB2, and clathrin heavy chain. DAB2 and clathrin dissociate from SH3KBP1 following growth factor treatment, enabling interaction with CBL. Interacts with DDN and probably associates with MAGI2 through its interaction with DDN. Interacts with the SH3 domains of SRC tyrosine-protein kinases SRC, LCK, LYN, FGR, FYN and HCK. Interacts with TRADD, BIRC2, TRAF1, TRAF2 and TNFR1, and the association with a TNFR1-associated complex upon stimulation with TNF-alpha seems to be mediated by SRC. Probably part of a complex consisting of at least SH3KBP1, ASAP1 and ARAP3. Interacts (via SH3 domains) with SHKBP1 (via PXXXPR motifs). Interacts with ATX2. Interaction with CBL is abolished in the presence of SHKBP1. Interacts (via SH3 domains) with ZFP36 (via extreme C-terminal region). Interacts with MAP3K4; this interaction enhances the association with ZFP36. In terms of processing, monoubiquitinated by CBL and CBLB after EGF stimulation; probably on its C-terminus.

The protein resides in the cytoplasm. The protein localises to the cytoskeleton. It localises to the cytoplasmic vesicle membrane. Its subcellular location is the synapse. It is found in the synaptosome. The protein resides in the cell junction. The protein localises to the focal adhesion. Functionally, adapter protein involved in regulating diverse signal transduction pathways. Involved in the regulation of endocytosis and lysosomal degradation of ligand-induced receptor tyrosine kinases, including EGFR and MET/hepatocyte growth factor receptor, through an association with CBL and endophilins. The association with CBL, and thus the receptor internalization, may be inhibited by an interaction with PDCD6IP and/or SPRY2. Involved in regulation of ligand-dependent endocytosis of the IgE receptor. Attenuates phosphatidylinositol 3-kinase activity by interaction with its regulatory subunit. May be involved in regulation of cell adhesion; promotes the interaction between TTK2B and PDCD6IP. May be involved in the regulation of cellular stress response via the MAPK pathways through its interaction with MAP3K4. Is involved in modulation of tumor necrosis factor mediated apoptosis. Plays a role in the regulation of cell morphology and cytoskeletal organization. Required in the control of cell shape and migration. Has an essential role in the stimulation of B cell activation. This chain is SH3 domain-containing kinase-binding protein 1 (Sh3kbp1), found in Mus musculus (Mouse).